A 220-amino-acid polypeptide reads, in one-letter code: Ribose-5-phosphate isomerase A (220 aa).

Residues 25–28, 80–83, and 93–96 contribute to the substrate site; these read TGST, DGAD, and KGGG. Catalysis depends on Glu102, which acts as the Proton acceptor. Lys120 contributes to the substrate binding site.

This sequence belongs to the ribose 5-phosphate isomerase family. In terms of assembly, homodimer.

The enzyme catalyses aldehydo-D-ribose 5-phosphate = D-ribulose 5-phosphate. Its pathway is carbohydrate degradation; pentose phosphate pathway; D-ribose 5-phosphate from D-ribulose 5-phosphate (non-oxidative stage): step 1/1. Functionally, catalyzes the reversible conversion of ribose-5-phosphate to ribulose 5-phosphate. This is Ribose-5-phosphate isomerase A from Bacillus anthracis.